The following is a 214-amino-acid chain: Putative glucose-6-phosphate isomerase 1 (214 aa).

Fe cation-binding residues include histidine 92, histidine 94, glutamate 101, and histidine 140.

This sequence belongs to the archaeal-type GPI family. In terms of assembly, homodimer. It depends on Fe cation as a cofactor.

Its subcellular location is the cytoplasm. It catalyses the reaction alpha-D-glucose 6-phosphate = beta-D-fructose 6-phosphate. It participates in carbohydrate degradation; glycolysis; D-glyceraldehyde 3-phosphate and glycerone phosphate from D-glucose: step 2/4. The protein is Putative glucose-6-phosphate isomerase 1 (pgiA1) of Rhizobium meliloti (strain 1021) (Ensifer meliloti).